Reading from the N-terminus, the 522-residue chain is 2-isopropylmalate synthase (522 aa).

One can recognise a Pyruvate carboxyltransferase domain in the interval 5–267 (VIIFDTTLRD…ETGINAKEIH (263 aa)). Residues D14, H202, H204, and N238 each contribute to the Mn(2+) site. Positions 392-522 (QLQQLVVQSD…MQKNRELGGV (131 aa)) are regulatory domain.

Belongs to the alpha-IPM synthase/homocitrate synthase family. LeuA type 1 subfamily. As to quaternary structure, homodimer. Mn(2+) is required as a cofactor.

The protein localises to the cytoplasm. It catalyses the reaction 3-methyl-2-oxobutanoate + acetyl-CoA + H2O = (2S)-2-isopropylmalate + CoA + H(+). Its pathway is amino-acid biosynthesis; L-leucine biosynthesis; L-leucine from 3-methyl-2-oxobutanoate: step 1/4. In terms of biological role, catalyzes the condensation of the acetyl group of acetyl-CoA with 3-methyl-2-oxobutanoate (2-ketoisovalerate) to form 3-carboxy-3-hydroxy-4-methylpentanoate (2-isopropylmalate). This chain is 2-isopropylmalate synthase, found in Shewanella baltica (strain OS185).